A 421-amino-acid chain; its full sequence is Enolase (421 aa).

Residue Gln161 coordinates (2R)-2-phosphoglycerate. Catalysis depends on Glu203, which acts as the Proton donor. Mg(2+) is bound by residues Asp240, Glu283, and Asp310. (2R)-2-phosphoglycerate is bound by residues Lys335, Arg364, Ser365, and Lys386. Lys335 (proton acceptor) is an active-site residue.

The protein belongs to the enolase family. Mg(2+) serves as cofactor.

The protein resides in the cytoplasm. It localises to the secreted. It is found in the cell surface. It carries out the reaction (2R)-2-phosphoglycerate = phosphoenolpyruvate + H2O. The protein operates within carbohydrate degradation; glycolysis; pyruvate from D-glyceraldehyde 3-phosphate: step 4/5. Functionally, catalyzes the reversible conversion of 2-phosphoglycerate (2-PG) into phosphoenolpyruvate (PEP). It is essential for the degradation of carbohydrates via glycolysis. The protein is Enolase of Sulfurimonas denitrificans (strain ATCC 33889 / DSM 1251) (Thiomicrospira denitrificans (strain ATCC 33889 / DSM 1251)).